Reading from the N-terminus, the 459-residue chain is MKLWGGRFTKPTNELVDEYASSIQFDKKLAAYDIEGSLAHVAMLKKCEIIPAEDADKIAEGLKIVLSKIEAGEAELSNEHEDIHMNVEKLLIDEVGPVGGRLHTGRSRNDQVALDMRLYLRDVIAELSDLLKAVQQSLITQAKANMDTVMPGYTHLQRAQPVLFAHHMMAYVFMFQRDVERFQDSLKRVNKSPLGAGALAGTTFPIDRHFVAEQLGFDGICENSLDAVSDRDFVVEFLSNSALVSTHLSRLCEELVQWSSAEFNFVELDDSFTTGSSMMPQKKNPDVAELVRGKTGRVYGHLMGMLTTLKGLPLAYNKDMQEDKEGMFDAHETLKGALQLFAPMMESMKVNKESMYKAVSNDYSNATDLADYLVNKGMTFRESHAVVGEAVLHCIEQNKYLLDLTLKEFKQYSEVIDEDIFDVLKPEAVVNARSVEGGTAKESVLQQIAKAEKLLESAK.

This sequence belongs to the lyase 1 family. Argininosuccinate lyase subfamily.

It is found in the cytoplasm. It carries out the reaction 2-(N(omega)-L-arginino)succinate = fumarate + L-arginine. The protein operates within amino-acid biosynthesis; L-arginine biosynthesis; L-arginine from L-ornithine and carbamoyl phosphate: step 3/3. The protein is Argininosuccinate lyase of Oceanobacillus iheyensis (strain DSM 14371 / CIP 107618 / JCM 11309 / KCTC 3954 / HTE831).